We begin with the raw amino-acid sequence, 1124 residues long: MDSLASLVLCGVSLLLSGTVEGAMDLILINSLPLVSDAETSLTCIASGWRPHEPITIGRDFEALMNQHQDPLEVTQDVTREWAKKVVWKREKASKINGAYFCEGRVRGEAIRIRTMKMRQQASFLPATLTMTVDKGDNVNISFKKVLIKEEDAVIYKNGSFIHSVPRHEVPDILEVHLPHAQPQDAGVYSARYIGGNLFTSAFTRLIVRRCEAQKWGPECNHLCTACMNNGVCHEDTGECICPPGFMGRTCEKACELHTFGRTCKERCSGQEGCKSYVFCLPDPYGCSCATGWKGLQCNEACHPGFYGPDCKLRCSCNNGEMCDRFQGCLCSPGWQGLQCEREGIQRMTPKIVDLPDHIEVNSGKFNPICKASGWPLPTNEEMTLVKPDGTVLHPKDFNHTDHFSVAIFTIHRILPPDSGVWVCSVNTVAGMVEKPFNISVKVLPKPLNAPNVIDTGHNFAVINISSEPYFGDGPIKSKKLLYKPVNHYEAWQHIQVTNEIVTLNYLEPRTEYELCVQLVRRGEGGEGHPGPVRRFTTASIGLPPPRGLNLLPKSQTTLNLTWQPIFPSSEDDFYVEVERRSVQKSDQQNIKVPGNLTSVLLNNLHPREQYVVRARVNTKAQGEWSEDLTAWTLSDILPPQPENIKISNITHSSAVISWTILDGYSISSITIRYKVQGKNEDQHVDVKIKNATITQYQLKGLEPETAYQVDIFAENNIGSSNPAFSHELVTLPESQAPADLGGGKMLLIAILGSAGMTCLTVLLAFLIILQLKRANVQRRMAQAFQNVREEPAVQFNSGTLALNRKVKNNPDPTIYPVLDWNDIKFQDVIGEGNFGQVLKARIKKDGLRMDAAIKRMKEYASKDDHRDFAGELEVLCKLGHHPNIINLLGACEHRGYLYLAIEYAPHGNLLDFLRKSRVLETDPAFAIANSTASTLSSQQLLHFAADVARGMDYLSQKQFIHRDLAARNILVGENYVAKIADFGLSRGQEVYVKKTMGRLPVRWMAIESLNYSVYTTNSDVWSYGVLLWEIVSLGGTPYCGMTCAELYEKLPQGYRLEKPLNCDDEVYDLMRQCWREKPYERPSFAQILVSLNRMLEERKTYVNTTLYEKFTYAGIDCSAEEAA.

The signal sequence occupies residues 1-22; the sequence is MDSLASLVLCGVSLLLSGTVEG. Residues 23–748 lie on the Extracellular side of the membrane; the sequence is AMDLILINSL…ADLGGGKMLL (726 aa). A disulfide bond links Cys-44 and Cys-102. The Ig-like C2-type 1 domain maps to 44–123; it reads CIASGWRPHE…RTMKMRQQAS (80 aa). Asn-140 and Asn-158 each carry an N-linked (GlcNAc...) asparagine glycan. EGF-like domains lie at 210 to 252, 254 to 299, and 301 to 341; these read RCEA…RTCE, ACEL…LQCN, and ACHP…LQCE. Disulfide bonds link Cys-211-Cys-220, Cys-224-Cys-233, Cys-227-Cys-240, Cys-242-Cys-251, Cys-255-Cys-264, Cys-268-Cys-274, Cys-280-Cys-287, Cys-289-Cys-298, Cys-302-Cys-311, Cys-315-Cys-323, Cys-317-Cys-329, Cys-331-Cys-340, and Cys-370-Cys-424. The Ig-like C2-type 2 domain occupies 350 to 440; it reads PKIVDLPDHI…GMVEKPFNIS (91 aa). Residues Asn-399, Asn-438, Asn-464, Asn-560, Asn-596, Asn-649, and Asn-691 are each glycosylated (N-linked (GlcNAc...) asparagine). Fibronectin type-III domains follow at residues 447–541, 545–636, and 641–735; these read PLNA…TASI, PPRG…TLSD, and QPEN…LPES. Residues 749 to 769 form a helical membrane-spanning segment; the sequence is IAILGSAGMTCLTVLLAFLII. Residues 770–1124 are Cytoplasmic-facing; it reads LQLKRANVQR…GIDCSAEEAA (355 aa). In terms of domain architecture, Protein kinase spans 824 to 1096; sequence IKFQDVIGEG…QILVSLNRML (273 aa). ATP contacts are provided by residues 830-838 and Lys-855; that span reads IGEGNFGQV. Residue Tyr-860 is modified to Phosphotyrosine; by autocatalysis. Asp-964 (proton acceptor) is an active-site residue. Phosphotyrosine; by autocatalysis occurs at positions 992, 1102, and 1108.

Belongs to the protein kinase superfamily. Tyr protein kinase family. Tie subfamily. As to quaternary structure, homodimer. Heterodimer with TIE1. Interacts with ANGPT1, ANGPT2 and ANGPT4. At cell-cell contacts in quiescent cells, forms a signaling complex composed of ANGPT1 plus TEK molecules from two adjoining cells. In the absence of endothelial cell-cell contacts, interaction with ANGPT1 mediates contacts with the extracellular matrix. Interacts with PTPRB; this promotes endothelial cell-cell adhesion. Interacts with DOK2, GRB2, GRB7, GRB14, PIK3R1 and PTPN11/SHP2. Colocalizes with DOK2 at contacts with the extracellular matrix in migrating cells. Interacts (tyrosine phosphorylated) with TNIP2. Interacts (tyrosine phosphorylated) with SHC1 (via SH2 domain). In terms of processing, proteolytic processing leads to the shedding of the extracellular domain (soluble TIE-2 alias sTIE-2). Post-translationally, autophosphorylated on tyrosine residues in response to ligand binding. Autophosphorylation occurs in trans, i.e. one subunit of the dimeric receptor phosphorylates tyrosine residues on the other subunit. Autophosphorylation occurs in a sequential manner, where Tyr-992 in the kinase activation loop is phosphorylated first, followed by autophosphorylation at Tyr-1108 and at additional tyrosine residues. ANGPT1-induced phosphorylation is impaired during hypoxia, due to increased expression of ANGPT2. Phosphorylation is important for interaction with GRB14, PIK3R1 and PTPN11. Phosphorylation at Tyr-1102 is important for interaction with SHC1, GRB2 and GRB7. Phosphorylation at Tyr-1108 is important for interaction with DOK2 and for coupling to downstream signal transduction pathways in endothelial cells. Dephosphorylated by PTPRB. Ubiquitinated. The phosphorylated receptor is ubiquitinated and internalized, leading to its degradation. Detected in umbilical vein endothelial cells. Proteolytic processing gives rise to a soluble extracellular domain that is detected in blood plasma (at protein level). Predominantly expressed in endothelial cells and their progenitors, the angioblasts. Has been directly found in placenta and lung, with a lower level in umbilical vein endothelial cells, brain and kidney.

It localises to the cell membrane. It is found in the cell junction. The protein localises to the focal adhesion. The protein resides in the cytoplasm. Its subcellular location is the cytoskeleton. It localises to the secreted. It carries out the reaction L-tyrosyl-[protein] + ATP = O-phospho-L-tyrosyl-[protein] + ADP + H(+). Angiopoietin binding leads to receptor dimerization and activation by autophosphorylation at Tyr-992 on the kinase activation loop. Inhibited by staurosporine, K252a, PP2, damnacanthal, SB203580, CEP-11207, CEP-11981 and CE-245677. Inhibited by triazine, thienopyrimidine and thiazolopyrimidine derivatives. Tyrosine-protein kinase that acts as a cell-surface receptor for ANGPT1, ANGPT2 and ANGPT4 and regulates angiogenesis, endothelial cell survival, proliferation, migration, adhesion and cell spreading, reorganization of the actin cytoskeleton, but also maintenance of vascular quiescence. Has anti-inflammatory effects by preventing the leakage of pro-inflammatory plasma proteins and leukocytes from blood vessels. Required for normal angiogenesis and heart development during embryogenesis. Required for post-natal hematopoiesis. After birth, activates or inhibits angiogenesis, depending on the context. Inhibits angiogenesis and promotes vascular stability in quiescent vessels, where endothelial cells have tight contacts. In quiescent vessels, ANGPT1 oligomers recruit TEK to cell-cell contacts, forming complexes with TEK molecules from adjoining cells, and this leads to preferential activation of phosphatidylinositol 3-kinase and the AKT1 signaling cascades. In migrating endothelial cells that lack cell-cell adhesions, ANGT1 recruits TEK to contacts with the extracellular matrix, leading to the formation of focal adhesion complexes, activation of PTK2/FAK and of the downstream kinases MAPK1/ERK2 and MAPK3/ERK1, and ultimately to the stimulation of sprouting angiogenesis. ANGPT1 signaling triggers receptor dimerization and autophosphorylation at specific tyrosine residues that then serve as binding sites for scaffold proteins and effectors. Signaling is modulated by ANGPT2 that has lower affinity for TEK, can promote TEK autophosphorylation in the absence of ANGPT1, but inhibits ANGPT1-mediated signaling by competing for the same binding site. Signaling is also modulated by formation of heterodimers with TIE1, and by proteolytic processing that gives rise to a soluble TEK extracellular domain. The soluble extracellular domain modulates signaling by functioning as decoy receptor for angiopoietins. TEK phosphorylates DOK2, GRB7, GRB14, PIK3R1; SHC1 and TIE1. This chain is Angiopoietin-1 receptor, found in Homo sapiens (Human).